The sequence spans 357 residues: D(4) dopamine receptor (357 aa).

The Extracellular portion of the chain corresponds to 1–32 (MGNRSAADADGLLAGRGPGTGGGAGSPGAAAA). Asn-3 is a glycosylation site (N-linked (GlcNAc...) asparagine). Residues 33 to 55 (LVGGVLLIGAVLAGNALVCVSVA) traverse the membrane as a helical segment. At 56-65 (AERALQTPTN) the chain is on the cytoplasmic side. A helical membrane pass occupies residues 66 to 88 (YFIVSLAAADLLLALLVLPLFVY). Residue Asp-75 coordinates Na(+). Residues 89-104 (SEVQGGVWQFSPGLCD) are Extracellular-facing. An intrachain disulfide couples Cys-103 to Cys-180. Residues 105–126 (ALMAMDVMLCTASIFNLCAISA) form a helical membrane-spanning segment. Residue Ser-117 participates in Na(+) binding. At 127-146 (DRFVAVAVPLSYNRQSGGGR) the chain is on the cytoplasmic side. The helical transmembrane segment at 147–170 (QLLLIGATWLLSAAVAAPVLCGLN) threads the bilayer. Over 171–186 (DARGRDPAVCRLEDRD) the chain is Extracellular. Residues 187–208 (YVVYSSVCSFFLPCPVMLLLYW) traverse the membrane as a helical segment. Topologically, residues 209–284 (ATFRGLRRWE…ITGRERKAMR (76 aa)) are cytoplasmic. A disordered region spans residues 225–261 (LHGRRPRRPSGPGPPPPEAVETPEAPEAIPTPDATLA). Pro residues predominate over residues 233–242 (PSGPGPPPPE). Residues 243–259 (AVETPEAPEAIPTPDAT) show a composition bias toward low complexity. The chain crosses the membrane as a helical span at residues 285-307 (VLPVVVGAFLVCWTPFFVVHITG). The Extracellular segment spans residues 308–316 (ALCPACAVP). Cysteines 310 and 313 form a disulfide. A helical transmembrane segment spans residues 317 to 339 (PRLVSAVTWLGYVNSALNPLIYT). The Cytoplasmic segment spans residues 340–357 (VFNAEFRAVFRKALRLCC). A lipid anchor (S-palmitoyl cysteine) is attached at Cys-357.

This sequence belongs to the G-protein coupled receptor 1 family. Forms homo- and heterooligomers with DRD2. D4.7 allele exhibits higher affinity for homodimers compared to DRD2 heterodimers, while alleles D42. and 4.4 have similar affinities for both. The interaction with DRD2 may modulate agonist-induced downstream signaling. Interacts with CLIC6. Interacts with GPRASP1. May interact with ADORA2A. Interacts with KLHL12. Polyubiquitinated by the BCR(KLHL12) E3 ubiquitin ligase complex: polyubiquitination does not lead to degradation of DRD4 protein. Post-translationally, palmitoylated. Palmitoylation of the C-terminal Cys is important for normal expression at the cell membrane.

It localises to the cell membrane. Functionally, dopamine receptor responsible for neuronal signaling in the mesolimbic system of the brain, an area of the brain that regulates emotion and complex behavior. Activated by dopamine, but also by epinephrine and norepinephrine, and by numerous synthetic agonists and drugs. Agonist binding triggers signaling via G proteins that inhibit adenylyl cyclase. Modulates the circadian rhythm of contrast sensitivity by regulating the rhythmic expression of NPAS2 in the retinal ganglion cells. The polypeptide is D(4) dopamine receptor (DRD4) (Mustela putorius furo (European domestic ferret)).